Consider the following 166-residue polypeptide: Ribosome maturation factor RimP (166 aa).

This sequence belongs to the RimP family.

It is found in the cytoplasm. Its function is as follows. Required for maturation of 30S ribosomal subunits. In Psychrobacter cryohalolentis (strain ATCC BAA-1226 / DSM 17306 / VKM B-2378 / K5), this protein is Ribosome maturation factor RimP.